The primary structure comprises 1674 residues: Maestro heat-like repeat-containing protein family member 2A (1674 aa).

Residues 1 to 26 form a disordered region; that stretch reads MTEAITEAAVASSEEVSEERDDLGPL. HEAT repeat units lie at residues 73–96, 97–133, 195–234, 254–292, 382–419, 424–461, 573–612, 615–641, 642–679, 739–776, 993–1030, 1221–1263, 1381–1420, and 1627–1674; these read ATTEPSVVINTLIRCLQVPEISTQ, RKVNIYNILQDIIQQEGELEEQCVQRLVAIASKEMRE, MPYMGITLATIFTMLRLANEAKIRQAICSAMETFCETVQF, LKVFPMYRYFVTVWLRHYNPEVKLGVIKSLKPMLGLLLP, SYPKELMKFFFSQMETNKEAVRVGTLNLIRAIVSADEP, RAIYLAIRVVKNTISDTRSKVRMAILHIIGQLALCGYQ, PAPQKLLARLLVLMSSPYKGEGRGIAMLNLLRTLSQSIAP, ADMWELEIALLVRYLEEHTEFTWDQKA, WEDKLIQFLRNSLKKTRGSSWSLRLSKELNNQIASFDS, KTVLNVLHDFEERIQESEQSWQISAWRKDHPWRRETVK, GQFGTMVGLIAPCTCDAHQRTRMASMNVLSSLLDLHAS, DPLM…SHRP, EKLLKPAALLLEKGADQEEDEALRVLSLRALGNMALGAPK, and LDFP…QGMS.

This chain is Maestro heat-like repeat-containing protein family member 2A (MROH2A), found in Homo sapiens (Human).